We begin with the raw amino-acid sequence, 312 residues long: Homoserine O-succinyltransferase (312 aa).

C142 acts as the Acyl-thioester intermediate in catalysis. The substrate site is built by K163 and S192. Residue H235 is the Proton acceptor of the active site. E237 is a catalytic residue. Residue R249 participates in substrate binding.

Belongs to the MetA family.

It localises to the cytoplasm. It carries out the reaction L-homoserine + succinyl-CoA = O-succinyl-L-homoserine + CoA. It functions in the pathway amino-acid biosynthesis; L-methionine biosynthesis via de novo pathway; O-succinyl-L-homoserine from L-homoserine: step 1/1. Its function is as follows. Transfers a succinyl group from succinyl-CoA to L-homoserine, forming succinyl-L-homoserine. This chain is Homoserine O-succinyltransferase, found in Alteromonas mediterranea (strain DSM 17117 / CIP 110805 / LMG 28347 / Deep ecotype).